The chain runs to 239 residues: Phosphoribosylaminoimidazole-succinocarboxamide synthase (239 aa).

Belongs to the SAICAR synthetase family.

It carries out the reaction 5-amino-1-(5-phospho-D-ribosyl)imidazole-4-carboxylate + L-aspartate + ATP = (2S)-2-[5-amino-1-(5-phospho-beta-D-ribosyl)imidazole-4-carboxamido]succinate + ADP + phosphate + 2 H(+). It participates in purine metabolism; IMP biosynthesis via de novo pathway; 5-amino-1-(5-phospho-D-ribosyl)imidazole-4-carboxamide from 5-amino-1-(5-phospho-D-ribosyl)imidazole-4-carboxylate: step 1/2. The protein is Phosphoribosylaminoimidazole-succinocarboxamide synthase of Chlorobium luteolum (strain DSM 273 / BCRC 81028 / 2530) (Pelodictyon luteolum).